Consider the following 492-residue polypeptide: Beta-glucosidase 38 (492 aa).

The signal sequence occupies residues methionine 1 to glycine 21. Glutamine 45 is an a beta-D-glucoside binding site. 2 N-linked (GlcNAc...) asparagine glycosylation sites follow: asparagine 73 and asparagine 77. A beta-D-glucoside-binding positions include histidine 146 and asparagine 191 to glutamate 192. The active-site Proton donor is glutamate 192. Cysteine 211 and cysteine 214 form a disulfide bridge. The N-linked (GlcNAc...) asparagine glycan is linked to asparagine 310. Position 331 (tyrosine 331) interacts with a beta-D-glucoside. N-linked (GlcNAc...) asparagine glycosylation occurs at asparagine 341. Glutamate 400 is an a beta-D-glucoside binding site. The active-site Nucleophile is glutamate 400. Asparagine 408 is a glycosylation site (N-linked (GlcNAc...) asparagine). A beta-D-glucoside is bound by residues tryptophan 447, glutamate 454 to tryptophan 455, and phenylalanine 463.

Belongs to the glycosyl hydrolase 1 family.

The catalysed reaction is Hydrolysis of terminal, non-reducing beta-D-glucosyl residues with release of beta-D-glucose.. This Oryza sativa subsp. japonica (Rice) protein is Beta-glucosidase 38 (BGLU38).